Reading from the N-terminus, the 480-residue chain is REST corepressor 1 (480 aa).

The interval 1-105 (MPAMVEKGPE…GGGMRVGPQY (105 aa)) is disordered. Low complexity-rich tracts occupy residues 21–58 (AASA…AAAA) and 66–89 (SLAA…SGSS). The interaction with HDAC1 stretch occupies residues 72 to 251 (PNGNSGSNSW…RHARKQKRER (180 aa)). The 87-residue stretch at 97-183 (GGMRVGPQYQ…KSLADLPNFT (87 aa)) folds into the ELM2 domain. Lys116 is covalently cross-linked (Glycyl lysine isopeptide (Lys-Gly) (interchain with G-Cter in SUMO2)). Phosphoserine is present on Ser121. Residues 184-235 (PFPDEWTVEDKVLFEQAFSFHGKTFHRIQQMLPDKSIASLVKFYYSWKKTRT) enclose the SANT 1 domain. A coiled-coil region spans residues 238 to 265 (SVMDRHARKQKREREESEDELEETNGSN). The disordered stretch occupies residues 238–308 (SVMDRHARKQ…AKNRAKRKPP (71 aa)). The residue at position 254 (Ser254) is a Phosphoserine. Residues 272-282 (DPNKESKKEVP) are compositionally biased toward basic and acidic residues. The tract at residues 290-378 (VKKEKHSTQA…LPEVIQKCNA (89 aa)) is interaction with KDM1A. Lys291 is covalently cross-linked (Glycyl lysine isopeptide (Lys-Gly) (interchain with G-Cter in SUMO2)). Residues 328–363 (ATTVLRQLDMELVSIKRQIQNIKQTNSALKEKLDGG) adopt a coiled-coil conformation. An SANT 2 domain is found at 375 to 426 (KCNARWTTEEQLLAVQAIRKYGRDFQAISDVIGNKSVVQVKNFFVNYRRRFN). The tract at residues 436 to 466 (AEHGKDETNGPANQKPVKSPESSIKIPEEED) is disordered. Position 454 is a phosphoserine (Ser454). Lys460 is covalently cross-linked (Glycyl lysine isopeptide (Lys-Gly) (interchain with G-Cter in SUMO2)).

This sequence belongs to the CoREST family. Component of a BHC histone deacetylase complex that contains HDAC1, HDAC2, HMG20B/BRAF35, KDM1A, RCOR1/CoREST and PHF21A/BHC80. The BHC complex may also contain ZMYM2, ZNF217, ZMYM3, GSE1 and GTF2I. Interacts with REST. Interacts with the SMARCE1/BAF57, suggesting that the BHC complex may recruit the ATP-dependent chromatin-remodeling SWI-SNF complex. Interacts directly with GFI1 and GFI1B in a RCOR/GFI/KDM1A/HDAC complex. Interacts with INMS1. Interacts with SOX2. Expressed in the external germinal layer (EGL) and internal granular layer (IGL) of the cerebellum and in Purkinje cells (at protein level).

It localises to the nucleus. Its function is as follows. Essential component of the BHC complex, a corepressor complex that represses transcription of neuron-specific genes in non-neuronal cells. The BHC complex is recruited at RE1/NRSE sites by REST and acts by deacetylating and demethylating specific sites on histones, thereby acting as a chromatin modifier. In the BHC complex, it serves as a molecular beacon for the recruitment of molecular machinery, including MeCP2 and SUV39H1, that imposes silencing across a chromosomal interval. Plays a central role in demethylation of Lys-4 of histone H3 by promoting demethylase activity of KDM1A on core histones and nucleosomal substrates. It also protects KDM1A from the proteasome. Component of a RCOR/GFI/KDM1A/HDAC complex that suppresses, via histone deacetylase (HDAC) recruitment, a number of genes implicated in multilineage blood cell development and controls hematopoietic differentiation. The sequence is that of REST corepressor 1 (Rcor1) from Mus musculus (Mouse).